Reading from the N-terminus, the 63-residue chain is LTPNDPLYSQQWGLSGTYGIRANTAWDNGYQGQGKIIAVVDTGITDHPDLLANRTSPLGYDFI.

Residues 11-63 form the Peptidase S8 domain; the sequence is QWGLSGTYGIRANTAWDNGYQGQGKIIAVVDTGITDHPDLLANRTSPLGYDFI.

Belongs to the peptidase S8 family. As to quaternary structure, heterodimer of a large and a small chain.

It is found in the secreted. This is Protease 2 small chain from Achromobacter lyticus.